The sequence spans 482 residues: DnaJ protein P58IPK homolog (482 aa).

Positions 1–42 (MDLFRVWSGMDFLAWRGMAYTLLLLNFVFACQLLLLQPLVSA) are cleaved as a signal peptide. TPR repeat units lie at residues 50 to 83 (AAEL…DPAL), 85 to 117 (EAYF…KSGD), 130 to 164 (AKSA…SPAC), 166 to 198 (KAKL…DENN), 199 to 232 (LEAL…DPEH), 245 to 278 (LLKK…DPEH), 283 to 316 (VHLY…DAEL), and 318 to 350 (EALH…SQDM). Residues 370–436 (DWYKILGISR…DKRARFDRGE (67 aa)) enclose the J domain.

In terms of assembly, interacts with the helicase domain of the tobamovirus (TMV) and the tobacco etch virus (TEV) replicases. In terms of tissue distribution, expressed in flower buds and flowers.

The protein localises to the endoplasmic reticulum lumen. Functionally, plays an important positive role in viral symptom development and is required for viral multiplication and pathogenesis. In Arabidopsis thaliana (Mouse-ear cress), this protein is DnaJ protein P58IPK homolog (P58IPK).